Reading from the N-terminus, the 245-residue chain is Complement C1q subcomponent subunit C (245 aa).

Positions 1-28 are cleaved as a signal peptide; that stretch reads MDVGPSSLPHLGLKLLLLLLLLPLRGQA. The Collagen-like domain maps to 31 to 112; the sequence is GCYGIPGMPG…GIPGEPGEEG (82 aa). A 4-hydroxyproline mark is found at Pro-36, Pro-39, Pro-42, Pro-45, Pro-54, and Pro-63. The interval 45-113 is disordered; it reads PGKDGYDGLP…IPGEPGEEGR (69 aa). Over residues 54–71 the composition is skewed to low complexity; sequence PGPKGEPGIPAIPGIRGP. Lys-75 bears the 5-hydroxylysine mark. O-linked (Gal...) hydroxylysine glycosylation occurs at Lys-75. Pro-81, Pro-93, Pro-96, Pro-99, and Pro-105 each carry 4-hydroxyproline. Residues 90 to 99 show a composition bias toward pro residues; that stretch reads MGPPGMPGVP. Positions 115 to 245 constitute a C1q domain; that stretch reads KQKFQSVFTV…VFSGFLLFPD (131 aa). Cysteines 179 and 193 form a disulfide.

As to quaternary structure, core component of the complement C1 complex, a calcium-dependent complex composed of 1 molecule of the C1Q subcomplex, 2 molecules of C1R and 2 molecules of C1S. The C1Q subcomplex is composed 18 subunits: 3 chains of C1QA, C1QB, and C1QC trimerize to form 6 collagen-like triple helices connected to six globular ligand-recognition modules (C1q domain). Post-translationally, O-linked glycans consist of Glc-Gal disaccharides bound to the oxygen atom of post-translationally added hydroxyl groups.

The protein localises to the secreted. It localises to the cell surface. Its activity is regulated as follows. The C1Q subcomplex is inhibited by sulfated molecules, such as triterpenoid sulfates, heparan sulfate, or chondroitin sulfates. Functionally, core component of the complement C1 complex, a multiprotein complex that initiates the classical pathway of the complement system, a cascade of proteins that leads to phagocytosis and breakdown of pathogens and signaling that strengthens the adaptive immune system. The classical complement pathway is initiated by the C1Q subcomplex of the C1 complex, which specifically binds IgG or IgM immunoglobulins complexed with antigens, forming antigen-antibody complexes on the surface of pathogens: C1QA, together with C1QB and C1QC, specifically recognizes and binds the Fc regions of IgG or IgM via its C1q domain. Immunoglobulin-binding activates the proenzyme C1R, which cleaves C1S, initiating the proteolytic cascade of the complement system. The C1Q subcomplex is activated by a hexamer of IgG complexed with antigens, while it is activated by a pentameric IgM. The C1Q subcomplex also recognizes and binds phosphatidylserine exposed on the surface of cells undergoing programmed cell death, possibly promoting activation of the complement system. This is Complement C1q subcomponent subunit C from Homo sapiens (Human).